The sequence spans 558 residues: uncharacterized protein (558 aa).

Residues 47–78 adopt a coiled-coil conformation; the sequence is DFDDLNSIFKDFQKQKKNLKDNILKFYNKKKE. 2 disordered regions span residues 239–266 and 424–447; these read NNNN…SKIE and NNNN…NSGE. Basic and acidic residues predominate over residues 245 to 266; the sequence is TETESEIESKSESESESESKIE. Residues 424–444 are compositionally biased toward low complexity; sequence NNNNNNNNNNNNNNNNNNNNN.

This is an uncharacterized protein from Dictyostelium discoideum (Social amoeba).